Reading from the N-terminus, the 184-residue chain is ATP synthase subunit b, chloroplastic (184 aa).

A helical membrane pass occupies residues 27–49 (FATNPINLSVVLGVLIFFGKGVL).

Belongs to the ATPase B chain family. In terms of assembly, F-type ATPases have 2 components, F(1) - the catalytic core - and F(0) - the membrane proton channel. F(1) has five subunits: alpha(3), beta(3), gamma(1), delta(1), epsilon(1). F(0) has four main subunits: a(1), b(1), b'(1) and c(10-14). The alpha and beta chains form an alternating ring which encloses part of the gamma chain. F(1) is attached to F(0) by a central stalk formed by the gamma and epsilon chains, while a peripheral stalk is formed by the delta, b and b' chains.

The protein resides in the plastid. The protein localises to the chloroplast thylakoid membrane. Functionally, f(1)F(0) ATP synthase produces ATP from ADP in the presence of a proton or sodium gradient. F-type ATPases consist of two structural domains, F(1) containing the extramembraneous catalytic core and F(0) containing the membrane proton channel, linked together by a central stalk and a peripheral stalk. During catalysis, ATP synthesis in the catalytic domain of F(1) is coupled via a rotary mechanism of the central stalk subunits to proton translocation. Its function is as follows. Component of the F(0) channel, it forms part of the peripheral stalk, linking F(1) to F(0). The sequence is that of ATP synthase subunit b, chloroplastic from Amborella trichopoda.